A 431-amino-acid chain; its full sequence is RNA-binding motif, single-stranded-interacting protein 3 (431 aa).

Positions 28-53 (YAPAPHPMAPPSPSTNSSSNSSGEQL) are disordered. Residues 31 to 40 (APHPMAPPSP) show a composition bias toward pro residues. RRM domains are found at residues 56–129 (TNLY…MAKQ) and 135–220 (TNLY…FADG). Disordered stretches follow at residues 220-242 (GGQK…PREG) and 393-431 (TSPQ…QSKP). Low complexity predominate over residues 401–411 (SSQDSSGQQQQ).

It localises to the cytoplasm. In terms of biological role, binds poly(A) and poly(U) oligoribonucleotides. The protein is RNA-binding motif, single-stranded-interacting protein 3 (Rbms3) of Mus musculus (Mouse).